Reading from the N-terminus, the 145-residue chain is Protein cornichon homolog 1 (145 aa).

The next 3 helical transmembrane spans lie at 5-25 (FAAF…FFAI), 57-77 (IIHG…SILA), and 116-136 (LRIS…YLYA).

It belongs to the cornichon family. As to quaternary structure, interacts with glr-1. As to expression, widely expressed in the nervous system including in the AVA interneurons.

Its subcellular location is the endoplasmic reticulum membrane. The protein resides in the synapse. The protein localises to the cell projection. It is found in the dendrite. Its function is as follows. Negatively regulates export of glr-1 from the endoplasmic reticulum to synapses. In Caenorhabditis elegans, this protein is Protein cornichon homolog 1.